A 412-amino-acid polypeptide reads, in one-letter code: Imidazolonepropionase (412 aa).

Residues H76 and H78 each contribute to the Fe(3+) site. 2 residues coordinate Zn(2+): H76 and H78. 4-imidazolone-5-propanoate is bound by residues R85, Y148, and H181. Y148 provides a ligand contact to N-formimidoyl-L-glutamate. H242 contacts Fe(3+). H242 contributes to the Zn(2+) binding site. Residue E245 participates in 4-imidazolone-5-propanoate binding. D317 is a Fe(3+) binding site. D317 provides a ligand contact to Zn(2+). Residues N319 and G321 each contribute to the N-formimidoyl-L-glutamate site. Residue S322 participates in 4-imidazolone-5-propanoate binding.

The protein belongs to the metallo-dependent hydrolases superfamily. HutI family. Zn(2+) serves as cofactor. Requires Fe(3+) as cofactor.

The protein localises to the cytoplasm. The enzyme catalyses 4-imidazolone-5-propanoate + H2O = N-formimidoyl-L-glutamate. The protein operates within amino-acid degradation; L-histidine degradation into L-glutamate; N-formimidoyl-L-glutamate from L-histidine: step 3/3. Its function is as follows. Catalyzes the hydrolytic cleavage of the carbon-nitrogen bond in imidazolone-5-propanoate to yield N-formimidoyl-L-glutamate. It is the third step in the universal histidine degradation pathway. This is Imidazolonepropionase from Staphylococcus saprophyticus subsp. saprophyticus (strain ATCC 15305 / DSM 20229 / NCIMB 8711 / NCTC 7292 / S-41).